Reading from the N-terminus, the 78-residue chain is Putative membrane protein insertion efficiency factor (78 aa).

It belongs to the UPF0161 family.

It localises to the cell inner membrane. In terms of biological role, could be involved in insertion of integral membrane proteins into the membrane. The polypeptide is Putative membrane protein insertion efficiency factor (Prochlorococcus marinus (strain MIT 9312)).